The primary structure comprises 483 residues: FAD-linked oxidoreductase easE (483 aa).

The FAD-binding PCMH-type domain maps to 10–193; that stretch reads QGRLPLYSAV…TEATVRVFSD (184 aa).

It belongs to the oxygen-dependent FAD-linked oxidoreductase family. The cofactor is FAD.

Its pathway is alkaloid biosynthesis; ergot alkaloid biosynthesis. In terms of biological role, FAD-linked oxidoreductase; part of the gene cluster that mediates the biosynthesis of fungal ergot alkaloid. DmaW catalyzes the first step of ergot alkaloid biosynthesis by condensing dimethylallyl diphosphate (DMAP) and tryptophan to form 4-dimethylallyl-L-tryptophan. The second step is catalyzed by the methyltransferase easF that methylates 4-dimethylallyl-L-tryptophan in the presence of S-adenosyl-L-methionine, resulting in the formation of 4-dimethylallyl-L-abrine. The catalase easC and the FAD-dependent oxidoreductase easE then transform 4-dimethylallyl-L-abrine to chanoclavine-I which is further oxidized by easD in the presence of NAD(+), resulting in the formation of chanoclavine-I aldehyde. Agroclavine dehydrogenase easG then mediates the conversion of chanoclavine-I aldehyde to agroclavine via a non-enzymatic adduct reaction: the substrate is an iminium intermediate that is formed spontaneously from chanoclavine-I aldehyde in the presence of glutathione. The presence of easA is not required to complete this reaction. Further conversion of agroclavine to paspalic acid is a two-step process involving oxidation of agroclavine to elymoclavine and of elymoclavine to paspalic acid, the second step being performed by the elymoclavine oxidase cloA. Paspalic acid is then further converted to D-lysergic acid. Ergopeptines are assembled from D-lysergic acid and three different amino acids by the D-lysergyl-peptide-synthetases composed each of a monomudular and a trimodular nonribosomal peptide synthetase subunit. LpsB and lpsC encode the monomodular subunits responsible for D-lysergic acid activation and incorporation into the ergopeptine backbone. LpsA1 and A2 subunits encode the trimodular nonribosomal peptide synthetase assembling the tripeptide portion of ergopeptines. LpsA1 is responsible for formation of the major ergopeptine, ergotamine, and lpsA2 for alpha-ergocryptine, the minor ergopeptine of the total alkaloid mixture elaborated by C.purpurea. D-lysergyl-tripeptides are assembled by the nonribosomal peptide synthetases and released as N-(D-lysergyl-aminoacyl)-lactams. Cyclolization of the D-lysergyl-tripeptides is performed by the Fe(2+)/2-ketoglutarate-dependent dioxygenase easH which introduces a hydroxyl group into N-(D-lysergyl-aminoacyl)-lactam at alpha-C of the aminoacyl residue followed by spontaneous condensation with the terminal lactam carbonyl group. The polypeptide is FAD-linked oxidoreductase easE (Claviceps purpurea (Ergot fungus)).